The primary structure comprises 23 residues: Textile convulsant peptide (23 aa).

3 disulfides stabilise this stretch: C2–C10, C5–C15, and C9–C20. P23 carries the proline amide; partial modification.

Post-translationally, the C-terminal amidation is described in Ref.1 and PubMed:23031820, but not in PubMed:22709442 and PubMed:36235146. Ju et al. (2022) describe a disulfide connectivity (C55-C61; C56-C69; C66-C68) that differs for the usual one. In terms of tissue distribution, expressed by the venom duct. Is present in all duct parts with a highest content in part 2 (proximal of the venom bulb) and then decreases in concentration toward the end of the duct.

It localises to the secreted. Causes convulsions mice. The chain is Textile convulsant peptide from Conus textile (Cloth-of-gold cone).